Consider the following 272-residue polypeptide: tRNA pseudouridine synthase A (272 aa).

Asp-62 functions as the Nucleophile in the catalytic mechanism. A substrate-binding site is contributed by Tyr-120.

It belongs to the tRNA pseudouridine synthase TruA family. Homodimer.

It carries out the reaction uridine(38/39/40) in tRNA = pseudouridine(38/39/40) in tRNA. Its function is as follows. Formation of pseudouridine at positions 38, 39 and 40 in the anticodon stem and loop of transfer RNAs. The sequence is that of tRNA pseudouridine synthase A from Nitrosomonas europaea (strain ATCC 19718 / CIP 103999 / KCTC 2705 / NBRC 14298).